The sequence spans 1358 residues: Tenascin-R (1358 aa).

A signal peptide spans Met1–Cys31. A disordered region spans residues Thr37–Ser58. Asn55 carries an N-linked (GlcNAc...) asparagine glycan. Positions Cys127 to Thr157 form a coiled coil. A glycan (O-linked (Xyl...) (chondroitin sulfate) serine) is linked at Ser176. Residues Asn180 and Asn198 are each glycosylated (N-linked (GlcNAc...) asparagine). 3 EGF-like domains span residues Cys188 to Cys199, Cys219 to Cys230, and Cys250 to Cys261. Ser271 carries an O-linked (Xyl...) (chondroitin sulfate) serine glycan. Residue Asn278 is glycosylated (N-linked (GlcNAc...) asparagine). Residues Cys281–Cys292 enclose the EGF-like 4 domain. 2 cysteine pairs are disulfide-bonded: Cys297–Cys307 and Cys314–Cys323. O-linked (Xyl...) (chondroitin sulfate) serine glycosylation is present at Ser302. Residues Cys312–Cys323 enclose the EGF-like 5 domain. 9 Fibronectin type-III domains span residues Pro328 to Gly420, Leu421 to Asp505, Gly506 to Pro597, Lys598 to Asp687, Ser688 to Ile777, Ser778 to Asp865, Pro866 to Ser955, Pro956 to Asp1042, and Pro1043 to Val1131. N-linked (GlcNAc...) asparagine glycans are attached at residues Asn392, Asn470, and Asn581. Position 724 is a phosphoserine (Ser724). 6 N-linked (GlcNAc...) asparagine glycosylation sites follow: Asn791, Asn869, Asn874, Asn1036, Asn1046, and Asn1261. Positions Gly1129 to Ile1344 constitute a Fibrinogen C-terminal domain.

This sequence belongs to the tenascin family. Interacts with BCAN and ACAN in a calcium-dependent manner. Interacts with SCN2B, PTPRZ1, and CSPG3. Forms oligomers. Isoforms 1 and 2 form respectively trimeric (tribrachion) and dimeric kink-armed rodlike structures, which are linked by disulfide bridges. Interacts with CNTN1, TNC and FN1. In terms of processing, contains N-linked oligosaccharides with a sulfated carbohydrate structures. Contains N-linked oligosaccharides, O-linked sialylated structures and O-linked chondroitin sulfate glycosaminoglycans. Brain-specific.

The protein resides in the secreted. It localises to the extracellular space. Its subcellular location is the extracellular matrix. In terms of biological role, neural extracellular matrix (ECM) protein involved in interactions with different cells and matrix components. Theses interactions can influence cellular behavior by either evoking a stable adhesion and differentiation, or repulsion and inhibition of neurite growth. Binding to cell surface gangliosides inhibits RGD-dependent integrin-mediated cell adhesion and results in an inhibition of PTK2/FAK1 (FAK) phosphorylation and cell detachment. Binding to membrane surface sulfatides results in a oligodendrocyte adhesion and differentiation. Interaction with CNTN1 induces a repulsion of neurons and an inhibition of neurite outgrowth. Interacts with SCN2B may play a crucial role in clustering and regulation of activity of sodium channels at nodes of Ranvier. TNR-linked chondroitin sulfate glycosaminoglycans are involved in the interaction with FN1 and mediates inhibition of cell adhesion and neurite outgrowth. The highly regulated addition of sulfated carbohydrate structure may modulate the adhesive properties of TNR over the course of development and during synapse maintenance. This Mus musculus (Mouse) protein is Tenascin-R (Tnr).